The following is a 201-amino-acid chain: Small ribosomal subunit protein uS10m (201 aa).

Belongs to the universal ribosomal protein uS10 family. Component of the mitochondrial ribosome small subunit (28S) which comprises a 12S rRNA and about 30 distinct proteins.

It localises to the mitochondrion. The polypeptide is Small ribosomal subunit protein uS10m (MRPS10) (Pongo abelii (Sumatran orangutan)).